A 673-amino-acid polypeptide reads, in one-letter code: Acetoacetyl-CoA synthetase (673 aa).

This sequence belongs to the ATP-dependent AMP-binding enzyme family.

The protein localises to the cytoplasm. The protein resides in the cytosol. The catalysed reaction is acetoacetate + ATP + CoA = acetoacetyl-CoA + AMP + diphosphate. Its function is as follows. Converts acetoacetate to acetoacetyl-CoA in the cytosol. Ketone body-utilizing enzyme, responsible for the synthesis of cholesterol and fatty acids. The protein is Acetoacetyl-CoA synthetase (aacs) of Danio rerio (Zebrafish).